A 369-amino-acid polypeptide reads, in one-letter code: MAYSTVQRVALASGLVLALSLLLPKAFLSRGKRQEPPPTPEGKLGRFPPMMHHHQAPSDGQTPGARFQRSHLAEAFAKAKGSGGGAGGGGSGRGLMGQIIPIYGFGIFLYILYILFKLSKGKTTAEDGKCYTAMPGNTHRKITSFELAQLQEKLKETEAAMEKLINRVGPNGESRAQTVTSDQEKRLLHQLREITRVMKEGKFIDRFSPEKEAEEAPYMEDWEGYPEETYPIYDLSDCIKRRQETILVDYPDPKELSAEEIAERMGMIEEEESDHLGWESLPTDPRAQEDNSVTSCDPKPETCSCCFHEDEDPAVLAENAGFSADSYPEQEETTKEEWSQDFKDEGLGISTDKAYTGSMLRKRNPQGLE.

The first 28 residues, 1 to 28 (MAYSTVQRVALASGLVLALSLLLPKAFL), serve as a signal peptide directing secretion. Residues 29–95 (SRGKRQEPPP…AGGGGSGRGL (67 aa)) are Lumenal-facing. The segment at 30-67 (RGKRQEPPPTPEGKLGRFPPMMHHHQAPSDGQTPGARF) is disordered. The chain crosses the membrane as a helical span at residues 96–116 (MGQIIPIYGFGIFLYILYILF). Residues 117–369 (KLSKGKTTAE…LRKRNPQGLE (253 aa)) lie on the Cytoplasmic side of the membrane. The stretch at 140-169 (RKITSFELAQLQEKLKETEAAMEKLINRVG) forms a coiled coil. N6-acetyllysine; alternate is present on Lys-202. Residue Lys-202 forms a Glycyl lysine isopeptide (Lys-Gly) (interchain with G-Cter in ubiquitin); alternate linkage. Disordered stretches follow at residues 272–295 (ESDH…SVTS) and 316–369 (LAEN…QGLE). A compositionally biased stretch (basic and acidic residues) spans 332-346 (ETTKEEWSQDFKDEG). The segment covering 360 to 369 (LRKRNPQGLE) has biased composition (basic residues).

It belongs to the ric-3 family. Monomer and homodimer. Interacts with CHRNA7, CHRNA3, CHRNA4, CHRNB2, CHRNB4 and HTR3A. Broadly expressed, with high levels in muscle, brain, heart, pancreas and testis. In the central nervous system, highest levels are detected in the cerebellum and pituitary gland. Over-expressed in brains from patients with bipolar disease or schizophrenia. Isoform 5 is predominantly expressed in the brain.

Its subcellular location is the endoplasmic reticulum membrane. The protein resides in the golgi apparatus membrane. In terms of biological role, molecular chaperone which facilitates proper subunit assembly and surface trafficking of alpha-7 (CHRNA7) and alpha-8 (CHRNA8) nicotinic acetylcholine receptors. May also promote functional expression of homomeric serotoninergic 5-HT3 receptors, and of heteromeric acetylcholine receptors alpha-3/beta-2, alpha-3/beta-4, alpha-4/beta-2 and alpha-4/beta-4. The protein is Protein RIC-3 (RIC3) of Homo sapiens (Human).